Here is a 280-residue protein sequence, read N- to C-terminus: Ribosomal RNA small subunit methyltransferase A (280 aa).

S-adenosyl-L-methionine-binding residues include Leu-24, Gly-49, Glu-70, Asp-95, and Asn-118.

The protein belongs to the class I-like SAM-binding methyltransferase superfamily. rRNA adenine N(6)-methyltransferase family. RsmA subfamily.

The protein resides in the cytoplasm. The enzyme catalyses adenosine(1518)/adenosine(1519) in 16S rRNA + 4 S-adenosyl-L-methionine = N(6)-dimethyladenosine(1518)/N(6)-dimethyladenosine(1519) in 16S rRNA + 4 S-adenosyl-L-homocysteine + 4 H(+). Functionally, specifically dimethylates two adjacent adenosines (A1518 and A1519) in the loop of a conserved hairpin near the 3'-end of 16S rRNA in the 30S particle. May play a critical role in biogenesis of 30S subunits. This chain is Ribosomal RNA small subunit methyltransferase A, found in Syntrophus aciditrophicus (strain SB).